We begin with the raw amino-acid sequence, 443 residues long: Serine/threonine-protein kinase ISR1 (443 aa).

The 281-residue stretch at 135–415 folds into the Protein kinase domain; that stretch reads LPSNKLVGQG…LRNDLFQDWK (281 aa). ATP contacts are provided by residues 141-149 and lysine 169; that span reads VGQGSYSYV. Aspartate 280 acts as the Proton acceptor in catalysis.

The protein belongs to the protein kinase superfamily. Ser/Thr protein kinase family.

It catalyses the reaction L-seryl-[protein] + ATP = O-phospho-L-seryl-[protein] + ADP + H(+). It carries out the reaction L-threonyl-[protein] + ATP = O-phospho-L-threonyl-[protein] + ADP + H(+). Its function is as follows. Probable serine/threonine protein kinase which may function redundantly with MPK1-independent branch of the PCK1 pathway that is presumed to be required for the tolerance to high temperatures and staurosporine. This Saccharomyces cerevisiae (strain ATCC 204508 / S288c) (Baker's yeast) protein is Serine/threonine-protein kinase ISR1 (ISR1).